Here is a 54-residue protein sequence, read N- to C-terminus: MPQLVPFYFVNEITFTFVIITLMVYILSKYILPRFVRLFLSRTFISKLSDISKK.

A helical membrane pass occupies residues 13 to 32 (ITFTFVIITLMVYILSKYIL).

It belongs to the ATPase protein 8 family. F-type ATPases have 2 components, CF(1) - the catalytic core - and CF(0) - the membrane proton channel.

The protein localises to the mitochondrion membrane. Its function is as follows. Mitochondrial membrane ATP synthase (F(1)F(0) ATP synthase or Complex V) produces ATP from ADP in the presence of a proton gradient across the membrane which is generated by electron transport complexes of the respiratory chain. F-type ATPases consist of two structural domains, F(1) - containing the extramembraneous catalytic core and F(0) - containing the membrane proton channel, linked together by a central stalk and a peripheral stalk. During catalysis, ATP synthesis in the catalytic domain of F(1) is coupled via a rotary mechanism of the central stalk subunits to proton translocation. Part of the complex F(0) domain. Minor subunit located with subunit a in the membrane. This chain is ATP synthase protein 8 (atp-8), found in Neurospora crassa (strain ATCC 24698 / 74-OR23-1A / CBS 708.71 / DSM 1257 / FGSC 987).